The chain runs to 465 residues: SET domain-containing protein 3 (465 aa).

One can recognise an SET domain in the interval 18-265 (DKVTVKWDKK…AREELLDSYG (248 aa)).

Belongs to the class V-like SAM-binding methyltransferase superfamily.

This is SET domain-containing protein 3 (set-3) from Caenorhabditis elegans.